Consider the following 493-residue polypeptide: ATP synthase subunit beta 3 (493 aa).

The interval 113–138 is disordered; it reads VPGDNGTPLPPGTPRRPIHRKPPPLA. 170-177 is an ATP binding site; that stretch reads GGAGVGKT.

It belongs to the ATPase alpha/beta chains family. F-type ATPases have 2 components, CF(1) - the catalytic core - and CF(0) - the membrane proton channel. CF(1) has five subunits: alpha(3), beta(3), gamma(1), delta(1), epsilon(1). CF(0) has three main subunits: a(1), b(2) and c(9-12). The alpha and beta chains form an alternating ring which encloses part of the gamma chain. CF(1) is attached to CF(0) by a central stalk formed by the gamma and epsilon chains, while a peripheral stalk is formed by the delta and b chains.

It is found in the cell inner membrane. It carries out the reaction ATP + H2O + 4 H(+)(in) = ADP + phosphate + 5 H(+)(out). Produces ATP from ADP in the presence of a proton gradient across the membrane. The catalytic sites are hosted primarily by the beta subunits. The chain is ATP synthase subunit beta 3 from Paraburkholderia xenovorans (strain LB400).